A 143-amino-acid polypeptide reads, in one-letter code: D-aminoacyl-tRNA deacylase (143 aa).

The Gly-cisPro motif, important for rejection of L-amino acids signature appears at 135–136; that stretch reads GP.

This sequence belongs to the DTD family. As to quaternary structure, homodimer.

It is found in the cytoplasm. It catalyses the reaction glycyl-tRNA(Ala) + H2O = tRNA(Ala) + glycine + H(+). The catalysed reaction is a D-aminoacyl-tRNA + H2O = a tRNA + a D-alpha-amino acid + H(+). Its function is as follows. An aminoacyl-tRNA editing enzyme that deacylates mischarged D-aminoacyl-tRNAs. Also deacylates mischarged glycyl-tRNA(Ala), protecting cells against glycine mischarging by AlaRS. Acts via tRNA-based rather than protein-based catalysis; rejects L-amino acids rather than detecting D-amino acids in the active site. By recycling D-aminoacyl-tRNA to D-amino acids and free tRNA molecules, this enzyme counteracts the toxicity associated with the formation of D-aminoacyl-tRNA entities in vivo and helps enforce protein L-homochirality. In Mycobacterium avium (strain 104), this protein is D-aminoacyl-tRNA deacylase.